The chain runs to 498 residues: MHTHNNFKTPSDEDELDDLDEDMVVGVIAEIEQEVLNESDSDNDEYDLVDMGAPVPDNDGDISYEGNDSSSSDDSFDPNAADSDSDDSMLDEAGGVTAGGATSAKKRKDDDNPSGSNKQPEATFDLDEDDETDETVRAMIAAIKKPRSSPPEIKLEDFITDICFHPDRDIIALATIIGDVHLYEYDNEANKLLRTIEVHSKACRDVEFTEDGRFLLTCSKDKCVMVTDMETEKLKKLYETAHDDAINTLHVLNENLFASGDDAGTVKLWDLRTKNAIFELKELEDQITQLTTNEQSKLLLATSADGYLTTFNISARKMYVQSEPYEEELNCMGVYRGDSKLVVGTSKGRLYTYNWGQFGYHCDMYPGIKSPISLMIPITDRIACVAGEDGNIRACHIAPYRNLGVVGQHNMPIESLDVNASGELIASSSHNNDVRFWNVKYFEDFGDIKYNEKHNAYKEQRHNLPSSKCSNASDFFSDLTKENADGDDDPGAGPSNMA.

Positions 1–131 are disordered; it reads MHTHNNFKTP…ATFDLDEDDE (131 aa). 2 stretches are compositionally biased toward acidic residues: residues 12-23 and 31-48; these read DEDELDDLDEDM and IEQEVLNESDSDNDEYDL. Composition is skewed to low complexity over residues 67-82 and 93-103; these read NDSSSSDDSFDPNAAD and AGGVTAGGATS. 6 WD repeats span residues 154–193, 198–237, 241–279, 282–321, 324–363, and 408–447; these read KLEDFITDICFHPDRDIIALATIIGDVHLYEYDNEANKLL, VHSKACRDVEFTEDGRFLLTCSKDKCVMVTDMETEKLKKL, AHDDAINTLHVLNENLFASGDDAGTVKLWDLRTKNAIFE, ELEDQITQLTTNEQSKLLLATSADGYLTTFNISARKMYVQ, PYEEELNCMGVYRGDSKLVVGTSKGRLYTYNWGQFGYHCD, and QHNMPIESLDVNASGELIASSSHNNDVRFWNVKYFEDFGD. The tract at residues 478-498 is disordered; it reads DLTKENADGDDDPGAGPSNMA.

It belongs to the WD repeat WDR55 family.

In Drosophila melanogaster (Fruit fly), this protein is WD repeat-containing protein 55 homolog.